A 680-amino-acid polypeptide reads, in one-letter code: Pescadillo homolog (680 aa).

Residues 315-336 (GEDEKPKAITNGEGESETPTDA) form a disordered region. Residues 359–471 (DPSQLFANCT…ELKEPNQYAP (113 aa)) enclose the BRCT domain. A disordered region spans residues 494-680 (VPLEEQQTEA…ERKMAKGKAT (187 aa)). Composition is skewed to acidic residues over residues 511 to 530 (DVED…DDEA), 543 to 556 (GSDD…EEAD), and 565 to 576 (AEVDDASEDDEQ). 3 stretches are compositionally biased toward basic and acidic residues: residues 597–610 (KASE…DPKS), 617–635 (RKEL…ERAK), and 654–664 (NKKDAESEKLR). Residues 609-680 (KSKAKQQKRK…ERKMAKGKAT (72 aa)) are a coiled coil. A compositionally biased stretch (basic residues) spans 665–680 (EKRRRIERKMAKGKAT).

The protein belongs to the pescadillo family. As to quaternary structure, component of the NOP7 complex, composed of ERB1, NOP7 and YTM1. The complex is held together by ERB1, which interacts with NOP7 via its N-terminal domain and with YTM1 via a high-affinity interaction between the seven-bladed beta-propeller domains of the 2 proteins. The NOP7 complex associates with the 66S pre-ribosome.

Its subcellular location is the nucleus. The protein resides in the nucleolus. The protein localises to the nucleoplasm. Component of the NOP7 complex, which is required for maturation of the 25S and 5.8S ribosomal RNAs and formation of the 60S ribosome. In Pyricularia oryzae (strain 70-15 / ATCC MYA-4617 / FGSC 8958) (Rice blast fungus), this protein is Pescadillo homolog.